Reading from the N-terminus, the 163-residue chain is Keratin-associated protein 11-1 (163 aa).

4 repeat units span residues Cys-111–Val-120, Cys-121–Val-130, Cys-131–Val-140, and Cys-141–Thr-150. Residues Cys-111–Thr-150 are 4 X 10 AA approximate repeats.

Belongs to the PMG family. In terms of tissue distribution, expressed in the upper matrix and in the entire hair cortex.

In the hair cortex, hair keratin intermediate filaments are embedded in an interfilamentous matrix, consisting of hair keratin-associated proteins (KRTAP), which are essential for the formation of a rigid and resistant hair shaft through their extensive disulfide bond cross-linking with abundant cysteine residues of hair keratins. The matrix proteins include the high-sulfur and high-glycine-tyrosine keratins. The polypeptide is Keratin-associated protein 11-1 (KRTAP11-1) (Homo sapiens (Human)).